A 293-amino-acid polypeptide reads, in one-letter code: 4-hydroxy-tetrahydrodipicolinate synthase (293 aa).

Thr46 contributes to the pyruvate binding site. Tyr133 serves as the catalytic Proton donor/acceptor. Catalysis depends on Lys161, which acts as the Schiff-base intermediate with substrate. Val202 is a binding site for pyruvate.

This sequence belongs to the DapA family. In terms of assembly, homotetramer; dimer of dimers.

It is found in the cytoplasm. The catalysed reaction is L-aspartate 4-semialdehyde + pyruvate = (2S,4S)-4-hydroxy-2,3,4,5-tetrahydrodipicolinate + H2O + H(+). Its pathway is amino-acid biosynthesis; L-lysine biosynthesis via DAP pathway; (S)-tetrahydrodipicolinate from L-aspartate: step 3/4. Functionally, catalyzes the condensation of (S)-aspartate-beta-semialdehyde [(S)-ASA] and pyruvate to 4-hydroxy-tetrahydrodipicolinate (HTPA). The sequence is that of 4-hydroxy-tetrahydrodipicolinate synthase from Wolbachia pipientis wMel.